The chain runs to 256 residues: DNA repair protein RecO (256 aa).

The protein belongs to the RecO family.

In terms of biological role, involved in DNA repair and RecF pathway recombination. This is DNA repair protein RecO from Bartonella henselae (strain ATCC 49882 / DSM 28221 / CCUG 30454 / Houston 1) (Rochalimaea henselae).